The sequence spans 1384 residues: DNA-directed RNA polymerase subunit beta (1384 aa).

Belongs to the RNA polymerase beta chain family. As to quaternary structure, the RNAP catalytic core consists of 2 alpha, 1 beta, 1 beta' and 1 omega subunit. When a sigma factor is associated with the core the holoenzyme is formed, which can initiate transcription.

The enzyme catalyses RNA(n) + a ribonucleoside 5'-triphosphate = RNA(n+1) + diphosphate. DNA-dependent RNA polymerase catalyzes the transcription of DNA into RNA using the four ribonucleoside triphosphates as substrates. The sequence is that of DNA-directed RNA polymerase subunit beta from Xylella fastidiosa (strain M12).